Consider the following 264-residue polypeptide: MKKVTINDLFMMKNREKIVMITAYDALFARLFDDYVDMILVGDSLNMSFGGKNETIGLSVDDMIYHTKAVQNGAKKAFLVVDMPFGSACTPQIALKNAIKIYKKTGCDAVKIEGTKEMADTIKLLSQNGIIVMSHIGLKPQMSRFEGGYKIKGKDELSAKSILEDAIVLESAGASLFLLEGIVSSVASEISQKLKVPTIGIGSGASCDGQVLVWSDAFGFFDEFKPKFVKRYLEGATLIKNSLKEYADEVKNSKFPSSQYEYTK.

Mg(2+) contacts are provided by D43 and D82. 3-methyl-2-oxobutanoate-binding positions include 43–44 (DS), D82, and K111. Position 113 (E113) interacts with Mg(2+). Residue E180 is the Proton acceptor of the active site.

Belongs to the PanB family. Homodecamer; pentamer of dimers. The cofactor is Mg(2+).

It is found in the cytoplasm. The enzyme catalyses 3-methyl-2-oxobutanoate + (6R)-5,10-methylene-5,6,7,8-tetrahydrofolate + H2O = 2-dehydropantoate + (6S)-5,6,7,8-tetrahydrofolate. It participates in cofactor biosynthesis; (R)-pantothenate biosynthesis; (R)-pantoate from 3-methyl-2-oxobutanoate: step 1/2. Catalyzes the reversible reaction in which hydroxymethyl group from 5,10-methylenetetrahydrofolate is transferred onto alpha-ketoisovalerate to form ketopantoate. This is 3-methyl-2-oxobutanoate hydroxymethyltransferase from Campylobacter fetus subsp. fetus (strain 82-40).